The following is a 214-amino-acid chain: Cell division protein SepF (214 aa).

Residues 24-120 form a disordered region; the sequence is DNYEEYEERK…NTRRAQESTA (97 aa). Basic and acidic residues predominate over residues 30–40; it reads EERKAVNEPPR. Residues 55–67 are compositionally biased toward polar residues; the sequence is ESYSQPAYTQQSE. The segment covering 69 to 98 has biased composition (basic and acidic residues); sequence VVEKPSARYRSAEAHQERDTQQAAYTEKKV. Residues 101-120 are compositionally biased toward polar residues; it reads MRSSNQSATTNTRRAQESTA.

Belongs to the SepF family. As to quaternary structure, homodimer. Interacts with FtsZ.

Its subcellular location is the cytoplasm. Its function is as follows. Cell division protein that is part of the divisome complex and is recruited early to the Z-ring. Probably stimulates Z-ring formation, perhaps through the cross-linking of FtsZ protofilaments. Its function overlaps with FtsA. This chain is Cell division protein SepF, found in Enterococcus faecalis (strain ATCC 700802 / V583).